A 124-amino-acid chain; its full sequence is uncharacterized protein (124 aa).

It localises to the cytoplasm. It is found in the nucleus. This is an uncharacterized protein from Schizosaccharomyces pombe (strain 972 / ATCC 24843) (Fission yeast).